The primary structure comprises 34 residues: Photosystem II reaction center protein Psb30 (34 aa).

The chain crosses the membrane as a helical span at residues 6–26 (IVAQLLSLALVTLSGPAVIFL).

Belongs to the Psb30/Ycf12 family. As to quaternary structure, PSII is composed of 1 copy each of membrane proteins PsbA, PsbB, PsbC, PsbD, PsbE, PsbF, PsbH, PsbI, PsbJ, PsbK, PsbL, PsbM, PsbT, PsbX, PsbY, PsbZ, Psb30/Ycf12, peripheral proteins of the oxygen-evolving complex and a large number of cofactors. It forms dimeric complexes.

Its subcellular location is the plastid. It is found in the chloroplast thylakoid membrane. In terms of biological role, a core subunit of photosystem II (PSII), probably helps stabilize the reaction center. In Emiliania huxleyi (Coccolithophore), this protein is Photosystem II reaction center protein Psb30.